An 842-amino-acid polypeptide reads, in one-letter code: Protein P (842 aa).

The terminal protein domain (TP) stretch occupies residues 1–177 (MPLSYQHFRR…FCGSPYSWEQ (177 aa)). A spacer region spans residues 178-345 (ELHHGAFLDG…YCLTHLVNLL (168 aa)). A disordered region spans residues 186-273 (DGPSRMGEES…AKNIASRSAS (88 aa)). The segment covering 223–239 (GPQSQQRPLDGSQQGRS) has biased composition (polar residues). A polymerase/reverse transcriptase domain (RT) region spans residues 346–689 (EDWGPCTEHG…YLNLYPVARQ (344 aa)). The Reverse transcriptase domain occupies 356–599 (RHHIRIPRTP…YSLNFMGYVI (244 aa)). Mg(2+) is bound by residues Asp428, Asp550, and Asp551.

The protein belongs to the hepadnaviridae P protein family.

The catalysed reaction is DNA(n) + a 2'-deoxyribonucleoside 5'-triphosphate = DNA(n+1) + diphosphate. It carries out the reaction Endonucleolytic cleavage to 5'-phosphomonoester.. Activated by host HSP70 and HSP40 in vitro to be able to bind the epsilon loop of the pgRNA. Because deletion of the RNase H region renders the protein partly chaperone-independent, the chaperones may be needed indirectly to relieve occlusion of the RNA-binding site by this domain. Inhibited by several reverse-transcriptase inhibitors: Lamivudine, Adefovir and Entecavir. In terms of biological role, multifunctional enzyme that converts the viral RNA genome into dsDNA in viral cytoplasmic capsids. This enzyme displays a DNA polymerase activity that can copy either DNA or RNA templates, and a ribonuclease H (RNase H) activity that cleaves the RNA strand of RNA-DNA heteroduplexes in a partially processive 3'- to 5'-endonucleasic mode. Neo-synthesized pregenomic RNA (pgRNA) are encapsidated together with the P protein, and reverse-transcribed inside the nucleocapsid. Initiation of reverse-transcription occurs first by binding the epsilon loop on the pgRNA genome, and is initiated by protein priming, thereby the 5'-end of (-)DNA is covalently linked to P protein. Partial (+)DNA is synthesized from the (-)DNA template and generates the relaxed circular DNA (RC-DNA) genome. After budding and infection, the RC-DNA migrates in the nucleus, and is converted into a plasmid-like covalently closed circular DNA (cccDNA). The activity of P protein does not seem to be necessary for cccDNA generation, and is presumably released from (+)DNA by host nuclear DNA repair machinery. This chain is Protein P, found in Homo sapiens (Human).